The primary structure comprises 314 residues: Methionyl-tRNA formyltransferase (314 aa).

113 to 116 lines the (6S)-5,6,7,8-tetrahydrofolate pocket; sequence SILP.

Belongs to the Fmt family.

The enzyme catalyses L-methionyl-tRNA(fMet) + (6R)-10-formyltetrahydrofolate = N-formyl-L-methionyl-tRNA(fMet) + (6S)-5,6,7,8-tetrahydrofolate + H(+). Functionally, attaches a formyl group to the free amino group of methionyl-tRNA(fMet). The formyl group appears to play a dual role in the initiator identity of N-formylmethionyl-tRNA by promoting its recognition by IF2 and preventing the misappropriation of this tRNA by the elongation apparatus. The sequence is that of Methionyl-tRNA formyltransferase from Photobacterium profundum (strain SS9).